A 183-amino-acid chain; its full sequence is Capsid protein (183 aa).

The interval 136–183 (NAPILSTLPETTVVRRRGRSPRRRTPSPRRRRSQSPRRRRSKSRESQC) is disordered. Basic residues predominate over residues 149–177 (VRRRGRSPRRRTPSPRRRRSQSPRRRRSK). Residues serine 155, serine 162, and serine 170 each carry the phosphoserine; by host modification. The stretch at 155 to 160 (SPRRRT) is one 1; half-length repeat. The interval 155-176 (SPRRRTPSPRRRRSQSPRRRRS) is 3 X 7 AA repeats of S-P-R-R-R-[PR]-S. Positions 158 to 175 (RRTPSPRRRRSQSPRRRR) match the Bipartite nuclear localization signal motif. 2 consecutive repeat copies span residues 162-168 (SPRRRRS) and 170-176 (SPRRRRS). The tract at residues 177-183 (KSRESQC) is RNA binding.

Belongs to the orthohepadnavirus core antigen family. As to quaternary structure, homodimerizes, then multimerizes. Interacts with cytosol exposed regions of viral L glycoprotein present in the reticulum-to-Golgi compartment. Interacts with human FLNB. Phosphorylated form interacts with host importin alpha; this interaction depends on the exposure of the NLS, which itself depends upon genome maturation and/or phosphorylation of the capsid protein. Interacts with host NUP153. Phosphorylated by host SRPK1, SRPK2, and maybe protein kinase C or GAPDH. Phosphorylation is critical for pregenomic RNA packaging. Protein kinase C phosphorylation is stimulated by HBx protein and may play a role in transport of the viral genome to the nucleus at the late step during the viral replication cycle.

The protein localises to the virion. It localises to the host cytoplasm. Its function is as follows. Self assembles to form an icosahedral capsid. Most capsids appear to be large particles with an icosahedral symmetry of T=4 and consist of 240 copies of capsid protein, though a fraction forms smaller T=3 particles consisting of 180 capsid proteins. Entering capsids are transported along microtubules to the nucleus. Phosphorylation of the capsid is thought to induce exposure of nuclear localization signal in the C-terminal portion of the capsid protein that allows binding to the nuclear pore complex via the importin (karyopherin-) alpha and beta. Capsids are imported in intact form through the nuclear pore into the nuclear basket, where it probably binds NUP153. Only capsids that contain the mature viral genome can release the viral DNA and capsid protein into the nucleoplasm. Immature capsids get stuck in the basket. Capsids encapsulate the pre-genomic RNA and the P protein. Pre-genomic RNA is reverse-transcribed into DNA while the capsid is still in the cytoplasm. The capsid can then either be directed to the nucleus, providing more genomes for transcription, or bud through the endoplasmic reticulum to provide new virions. This is Capsid protein from Hepatitis B virus genotype C subtype ar (isolate Japan/S-207/1988) (HBV-C).